The primary structure comprises 388 residues: Carbohydrate sulfotransferase 4 (388 aa).

The Cytoplasmic segment spans residues 1–7 (MMLLKKG). Residues 8 to 28 (RLLMFLGSQVIVVALFIHMSV) traverse the membrane as a helical; Signal-anchor for type II membrane protein segment. The Lumenal portion of the chain corresponds to 29-388 (HRHLSQREES…HILGQVFREG (360 aa)). 3'-phosphoadenylyl sulfate-binding positions include 50–56 (WRSGSSF) and 204–212 (RDPRAVFRS). Residues N307, N328, and N369 are each glycosylated (N-linked (GlcNAc...) asparagine).

It belongs to the sulfotransferase 1 family. Gal/GlcNAc/GalNAc subfamily. As to quaternary structure, monomer. In terms of tissue distribution, specifically expressed in high endothelial venules (HEV) of peripheral lymph nodes.

It localises to the golgi apparatus membrane. The catalysed reaction is 3-O-{N-acetyl-beta-D-glucosaminyl-(1-&gt;3)-beta-D-galactosyl-(1-&gt;3)-N-acetyl-alpha-D-galactosaminyl}-L-threonyl-[protein] + 3'-phosphoadenylyl sulfate = 3-O-{6-O-sulfo-N-acetyl-beta-D-glucosaminyl-(1-&gt;3)-beta-D-galactosyl-(1-&gt;3)-N-acetyl-alpha-D-galactosaminyl}-L-threonyl-[protein] + adenosine 3',5'-bisphosphate + H(+). It carries out the reaction 3-O-{N-acetyl-beta-D-glucosaminyl-(1-&gt;3)-beta-D-galactosyl-(1-&gt;3)-N-acetyl-alpha-D-galactosaminyl}-L-seryl-[protein] + 3'-phosphoadenylyl sulfate = 3-O-{6-O-sulfo-N-acetyl-beta-D-glucosaminyl-(1-&gt;3)-beta-D-galactosyl-(1-&gt;3)-N-acetyl-alpha-D-galactosaminyl}-L-seryl-[protein] + adenosine 3',5'-bisphosphate + H(+). The enzyme catalyses a 3-O-{beta-D-galactosyl-(1-&gt;3)-[N-acetyl-beta-D-glucosaminyl-(1-&gt;6)]-N-acetyl-alpha-D-galactosaminyl}-L-threonyl-[protein] + 3'-phosphoadenylyl sulfate = 3-O-{beta-D-galactosyl-(1-&gt;3)-[6-O-sulfo-N-acetyl-beta-D-glucosaminyl-(1-&gt;6)]-N-acetyl-alpha-D-galactosaminyl}-L-threonyl-[protein] + adenosine 3',5'-bisphosphate + H(+). It catalyses the reaction 3-O-{beta-D-galactosyl-(1-&gt;3)-[N-acetyl-beta-D-glucosaminyl-(1-&gt;6)]-N-acetyl-alpha-D-galactosaminyl}-L-seryl-[protein] + 3'-phosphoadenylyl sulfate = 3-O-{beta-D-galactosyl-(1-&gt;3)-[6-O-sulfo-N-acetyl-beta-D-glucosaminyl-(1-&gt;6)]-N-acetyl-alpha-D-galactosaminyl}-L-seryl-[protein] + adenosine 3',5'-bisphosphate + H(+). Its pathway is protein modification; carbohydrate sulfation. Its function is as follows. Sulfotransferase involved in SELL/L-selectin ligand biosynthesis pathway. Catalyzes the transfer of the sulfate group from 3'-phospho-5'-adenylyl sulfate (PAPS) onto the hydroxyl group at C-6 position of the non-reducing N-acetylglucosamine (GlcNAc) residue within O-linked mucin-type glycans. Contributes to generate sialyl 6-sulfo Lewis X determinant (also known as MECA-79 epitope) for SELL recognition, a prerequisite for continuous lymphocyte homing into peripheral lymph nodes and antigen immune surveillance. Transfers the sulfate group primarily on core 2 GlcNAcbeta1-6(Galbeta1-3)GalNAcalphaSer/Thr and extended core 1 GlcNAcbeta1-3Galbeta1-3GalNAcalphaSer/Thr based O-linked glycans on CD34 and GLYCAM1 peripheral node addressins (PNAds) expressed on the lumenal side of high endothelial venules (HEVs). The recognition of PNAds by SELL initiates a multistep process comprising tethering and rolling of blood lymphocytes on HEVs against the blood flow, followed by chemokine signaling, integrin-mediated lymphocyte adhesion onto endothelial cells and lymphocyte transendothelial migration. Modulates rolling velocity and differential T and B lymphocyte recruitment into peripheral lymph nodes, with a major role in B lymphocyte homing. Might be redundant in sulfation of MADCAM1 and lymphocyte trafficking to mesenteric lymph nodes. Can also sulfonate core 3 GlcNAcbeta1-3GalNAc-R based glycans as well as GlcNAcbeta1-3Galbeta1-Glc, GlcNAcbeta1-6ManOMe and GlcNAcbeta1-2Man oligosaccharides, which might be ectopically expressed during tumorigenesis. In Mus musculus (Mouse), this protein is Carbohydrate sulfotransferase 4 (Chst4).